The following is a 109-amino-acid chain: uncharacterized protein (109 aa).

The N-terminal stretch at 1-25 (MKGIFLVVQLGFSIMVFLFLAAVNW) is a signal peptide. Residues 73-95 (YPVMSALMIISFLYVLAALFLLI) traverse the membrane as a helical segment.

The protein localises to the membrane. This is an uncharacterized protein from Bacillus subtilis (strain 168).